The primary structure comprises 243 residues: 4-hydroxy-tetrahydrodipicolinate reductase (243 aa).

NAD(+) contacts are provided by residues 9 to 14 (GANGKM), 78 to 80 (GTS), and 104 to 107 (APNF). Catalysis depends on H134, which acts as the Proton donor/acceptor. H135 provides a ligand contact to (S)-2,3,4,5-tetrahydrodipicolinate. K138 serves as the catalytic Proton donor. Position 144-145 (144-145 (GT)) interacts with (S)-2,3,4,5-tetrahydrodipicolinate.

The protein belongs to the DapB family.

It is found in the cytoplasm. The catalysed reaction is (S)-2,3,4,5-tetrahydrodipicolinate + NAD(+) + H2O = (2S,4S)-4-hydroxy-2,3,4,5-tetrahydrodipicolinate + NADH + H(+). It carries out the reaction (S)-2,3,4,5-tetrahydrodipicolinate + NADP(+) + H2O = (2S,4S)-4-hydroxy-2,3,4,5-tetrahydrodipicolinate + NADPH + H(+). It functions in the pathway amino-acid biosynthesis; L-lysine biosynthesis via DAP pathway; (S)-tetrahydrodipicolinate from L-aspartate: step 4/4. Its function is as follows. Catalyzes the conversion of 4-hydroxy-tetrahydrodipicolinate (HTPA) to tetrahydrodipicolinate. This Legionella pneumophila (strain Paris) protein is 4-hydroxy-tetrahydrodipicolinate reductase.